The sequence spans 187 residues: Ribosome-recycling factor (187 aa).

This sequence belongs to the RRF family.

It localises to the cytoplasm. In terms of biological role, responsible for the release of ribosomes from messenger RNA at the termination of protein biosynthesis. May increase the efficiency of translation by recycling ribosomes from one round of translation to another. The chain is Ribosome-recycling factor from Flavobacterium psychrophilum (strain ATCC 49511 / DSM 21280 / CIP 103535 / JIP02/86).